A 175-amino-acid polypeptide reads, in one-letter code: Coagulogen (175 aa).

Disulfide bonds link Cys-8–Cys-167, Cys-10–Cys-95, Cys-60–Cys-161, Cys-65–Cys-121, Cys-75–Cys-168, Cys-88–Cys-140, Cys-127–Cys-170, and Cys-134–Cys-172.

This sequence belongs to the coagulin family. Coagulogen is cleaved after Arg-18 and Arg-46 by a clotting enzyme contained in the hemocyte and activated by a bacterial endotoxin (lipopolysaccharide). This cleavage releases the peptide C and leaves 2 chains of coagulin, A and B, linked by two disulfide bonds. Coagulin molecules interlink to form a gel. In terms of tissue distribution, hemolymph.

The protein localises to the secreted. In terms of biological role, coagulogen is a gel-forming protein of hemolymph; it hinders the spread of invaders by immobilizing them. The chain is Coagulogen from Tachypleus gigas (Southeast Asian horseshoe crab).